Consider the following 470-residue polypeptide: Hydroxymethylglutaryl-CoA synthase (470 aa).

The active-site Proton donor/acceptor is the E100. C134 acts as the Acyl-thioester intermediate in catalysis. (3S)-3-hydroxy-3-methylglutaryl-CoA is bound by residues C134, T176, S225, H269, K278, N348, and S382. H269 acts as the Proton donor/acceptor in catalysis.

The protein belongs to the thiolase-like superfamily. HMG-CoA synthase family.

It catalyses the reaction acetoacetyl-CoA + acetyl-CoA + H2O = (3S)-3-hydroxy-3-methylglutaryl-CoA + CoA + H(+). The protein operates within metabolic intermediate biosynthesis; (R)-mevalonate biosynthesis; (R)-mevalonate from acetyl-CoA: step 2/3. Functionally, hydroxymethylglutaryl-CoA synthase; part of the first module of ergosterol biosynthesis pathway that includes the early steps of the pathway, conserved across all eukaryotes, and which results in the formation of mevalonate from acetyl-coenzyme A (acetyl-CoA). This module also plays a key role in the biosynthesis of triterpenes such as ganoderic acids (GA), a group of highly oxygenated lanostane-type triterpenoids which are well recognized as a main group of unique bioactive compounds in the medicinal mushroom Ganoderma lucidum. In this module, the acetyl-CoA acetyltransferase catalyzes the formation of acetoacetyl-CoA. The hydroxymethylglutaryl-CoA synthase HMGS then condenses acetyl-CoA with acetoacetyl-CoA to form HMG-CoA. The rate-limiting step of the early module is the reduction to mevalonate by the 3-hydroxy-3-methylglutaryl-coenzyme A (HMG-CoA) reductase. This Ganoderma lucidum (Ling zhi medicinal fungus) protein is Hydroxymethylglutaryl-CoA synthase.